We begin with the raw amino-acid sequence, 325 residues long: Polyprenyl transferase mpaA (325 aa).

A run of 3 helical transmembrane segments spans residues 27–47 (MPYY…ALKL), 56–76 (VEYI…LCGA), and 108–128 (VEAL…LDLI). An N-linked (GlcNAc...) asparagine glycan is attached at Asn-131. Transmembrane regions (helical) follow at residues 134–151 (IWGL…YPYL), 159–179 (VFIY…ITGW), 192–212 (IFTH…YFNT), 240–260 (LFLA…VLKI), 262–282 (SPWL…MQIV), and 295–315 (IHWD…VEVG).

Belongs to the UbiA prenyltransferase family. Mg(2+) is required as a cofactor.

The protein localises to the golgi apparatus membrane. The enzyme catalyses 5,7-dihydroxy-4-methylphthalide + (2E,6E)-farnesyl diphosphate = 4-farnesyl-3,5-dihydroxy-6-methylphthalide + diphosphate. Its pathway is secondary metabolite biosynthesis; terpenoid biosynthesis. In terms of biological role, polyprenyl transferase; part of the gene cluster that mediates the biosynthesis of mycophenolic acid (MPA), the first isolated antibiotic natural product in the world obtained from a culture of Penicillium brevicompactum in 1893. MpaA is a Golgi apparatus-associated enzyme that catalyzes the prenylation of 5,7-dihydroxy-4,6-dimethylphthalide (DHMP) to yield farnesyl-DHMP (FDHMP). The first step of the pathway is the synthesis of 5-methylorsellinic acid (5MOA) by the cytosolic polyketide synthase mpaC. 5MOA is then converted to the phthalide compound 5,7-dihydroxy-4,6-dimethylphthalide (DHMP) by the endoplasmic reticulum-bound cytochrome P450 monooxygenase mpaDE. MpaDE first catalyzes hydroxylation of 5-MOA to 4,6-dihydroxy-2-(hydroxymethyl)-3-methylbenzoic acid (DHMB). MpaDE then acts as a lactone synthase that catalyzes the ring closure to convert DHMB into DHMP. The next step is the prenylation of DHMP by the Golgi apparatus-associated prenyltransferase mpaA to yield farnesyl-DHMP (FDHMP). The ER-bound oxygenase mpaB then mediates the oxidative cleavage the C19-C20 double bond in FDHMP to yield FDHMP-3C via a mycophenolic aldehyde intermediate. The O-methyltransferase mpaG catalyzes the methylation of FDHMP-3C to yield MFDHMP-3C. After the cytosolic methylation of FDHMP-3C, MFDHMP-3C enters into peroxisomes probably via free diffusion due to its low molecular weight. Upon a peroxisomal CoA ligation reaction, catalyzed by a beta-oxidation component enzyme acyl-CoA ligase ACL891, MFDHMP-3C-CoA would then be restricted to peroxisomes for the following beta-oxidation pathway steps. The peroxisomal beta-oxidation machinery than converts MFDHMP-3C-CoA into MPA_CoA, via a beta-oxidation chain-shortening process. Finally mpaH acts as a peroxisomal acyl-CoA hydrolase with high substrate specificity toward MPA-CoA to release the final product MPA. The polypeptide is Polyprenyl transferase mpaA (Penicillium roqueforti (strain FM164)).